Consider the following 143-residue polypeptide: Large ribosomal subunit protein uL13 (143 aa).

The protein belongs to the universal ribosomal protein uL13 family. As to quaternary structure, part of the 50S ribosomal subunit.

Functionally, this protein is one of the early assembly proteins of the 50S ribosomal subunit, although it is not seen to bind rRNA by itself. It is important during the early stages of 50S assembly. This is Large ribosomal subunit protein uL13 from Dehalococcoides mccartyi (strain ATCC BAA-2100 / JCM 16839 / KCTC 5957 / BAV1).